Here is a 217-residue protein sequence, read N- to C-terminus: Large ribosomal subunit protein uL1 (217 aa).

Belongs to the universal ribosomal protein uL1 family. As to quaternary structure, part of the 50S ribosomal subunit.

Binds directly to 23S rRNA. The L1 stalk is quite mobile in the ribosome, and is involved in E site tRNA release. Functionally, protein L1 is also a translational repressor protein, it controls the translation of the L11 operon by binding to its mRNA. The chain is Large ribosomal subunit protein uL1 from Wolbachia pipientis wMel.